We begin with the raw amino-acid sequence, 504 residues long: MSHSSLSWLSNFNVETVPSKYLRRSSIIGTIGPKTNNVDVLVKLRKAGLNVVRMNFSHGSYEYHQSVIDNARKSEEVYKGRPLAIALDTKGPEIRTGTTIGDKDYPIPPNHEMIFTTDDAYKTKCDDKVMYIDYKNITKVIAPGKIIYVDDGVLSFEVISVDDEQTLKVRSLNAGKISSHKGVNLPGTDVDLPALSEKDIADIKFGVKNKVHMIFASFIRTANDVLEIRKVLGEEGKDIQIISKIENQQGVNNFDEILEVTDGVMVARGDLGIEIPAPQVFVVQKQLIAKCNLAAKPVICATQMLESMTYNPRPTRAEVSDVGNAILDGADCVMLSGETAKGNYPVEAVSMMHNTCLTAEKAIAYPQLFNELRSLAKKPTATTETCAVAAVSAAYEQDAKAIVVLSTSGLSARLVSKYKPDVPILMVTRNERAAKFSHLYRGVYPFIYDKPSIENWQEDVENRLRWAVSEAVELGIISKGDSIVTVQGWTRGSGHSNTVRIVQA.

Position 53 (Arg53) interacts with substrate. Positions 55, 57, 88, and 89 each coordinate K(+). An ATP-binding site is contributed by 55-58 (NFSH). ATP is bound by residues Arg95 and Lys181. Glu246 serves as a coordination point for Mg(2+). Substrate is bound by residues Gly269, Asp270, and Thr302. Residue Asp270 participates in Mg(2+) binding.

Belongs to the pyruvate kinase family. Homotetramer. Mg(2+) serves as cofactor. The cofactor is K(+).

Its subcellular location is the cytoplasm. It catalyses the reaction pyruvate + ATP = phosphoenolpyruvate + ADP + H(+). It functions in the pathway carbohydrate degradation; glycolysis; pyruvate from D-glyceraldehyde 3-phosphate: step 5/5. The polypeptide is Pyruvate kinase (CDC19) (Candida albicans (strain SC5314 / ATCC MYA-2876) (Yeast)).